Consider the following 296-residue polypeptide: Bifunctional protein FolD (296 aa).

NADP(+) contacts are provided by residues 166–168 (GRS), Ser-191, and Ile-232.

Belongs to the tetrahydrofolate dehydrogenase/cyclohydrolase family. As to quaternary structure, homodimer.

It catalyses the reaction (6R)-5,10-methylene-5,6,7,8-tetrahydrofolate + NADP(+) = (6R)-5,10-methenyltetrahydrofolate + NADPH. It carries out the reaction (6R)-5,10-methenyltetrahydrofolate + H2O = (6R)-10-formyltetrahydrofolate + H(+). Its pathway is one-carbon metabolism; tetrahydrofolate interconversion. Catalyzes the oxidation of 5,10-methylenetetrahydrofolate to 5,10-methenyltetrahydrofolate and then the hydrolysis of 5,10-methenyltetrahydrofolate to 10-formyltetrahydrofolate. This chain is Bifunctional protein FolD, found in Cereibacter sphaeroides (strain ATCC 17023 / DSM 158 / JCM 6121 / CCUG 31486 / LMG 2827 / NBRC 12203 / NCIMB 8253 / ATH 2.4.1.) (Rhodobacter sphaeroides).